Reading from the N-terminus, the 197-residue chain is MNFYTSSVGVRQYDHSLLVLNDLTNIHITCEDVHCSAKLLCYIYDVYKSRYPSIDEHSFLRMLKGPDDAEILSTFLRTIIWILSHDRDFPDEFRIPATALVSVYIKYYSDLKPRAPTTNCWTCRMSKNNLPFQVPSIKGFPAEAELYIVPISDHDGKTIEFSGMKTLYKSPSKKKHNYVISSDMPPLSARYTVWDGK.

Belongs to the tenuiviruses p3 protein family. Homodimer.

The protein resides in the host cytoplasm. Acts as a suppressor of RNA-mediated gene silencing, also known as post-transcriptional gene silencing (PTGS), presumably through the binding of dsRNA. The chain is Suppressor of RNA silencing p3 from Rottboellia (Sorghum).